Here is a 297-residue protein sequence, read N- to C-terminus: Nuclear transcription factor Y subunit B-11 (297 aa).

The disordered stretch occupies residues 1-25 (MKSRKSYGHLLSPVGSPPLDNESGE). Residues 63-69 (LPIANVS) mediate DNA binding. Residues 90 to 101 (VQECVSEFISFV) are subunit association domain (SAD).

This sequence belongs to the NFYB/HAP3 subunit family. Heterotrimeric transcription factor composed of three components, NF-YA, NF-YB and NF-YC. NF-YB and NF-YC must interact and dimerize for NF-YA association and DNA binding. Interacts with NFYC2, NFYC4 and NFYC6. Expressed in roots, culms, nodes, leaf blades, leaf sheaths and young panicles.

It is found in the nucleus. It localises to the cytoplasm. In terms of biological role, probable transcription factor involved in the regulation of flowering time under long day (LD) conditions. Functions as a repressor of flowering, independently of HD1 and GHD7. Controls flowering time by negatively regulating the expression of EHD1 and HD3A. Regulates plant height by promoting cell elongation in the internodes. Component of the NF-Y/HAP transcription factor complex. The sequence is that of Nuclear transcription factor Y subunit B-11 (HD5) from Oryza sativa subsp. japonica (Rice).